Consider the following 172-residue polypeptide: Adenine phosphoribosyltransferase (172 aa).

Belongs to the purine/pyrimidine phosphoribosyltransferase family. As to quaternary structure, homodimer.

It localises to the cytoplasm. The catalysed reaction is AMP + diphosphate = 5-phospho-alpha-D-ribose 1-diphosphate + adenine. The protein operates within purine metabolism; AMP biosynthesis via salvage pathway; AMP from adenine: step 1/1. Its function is as follows. Catalyzes a salvage reaction resulting in the formation of AMP, that is energically less costly than de novo synthesis. This Microcystis aeruginosa (strain NIES-843 / IAM M-2473) protein is Adenine phosphoribosyltransferase.